The sequence spans 843 residues: Protein P (843 aa).

The tract at residues Met-1–Gln-177 is terminal protein domain (TP). The interval Asp-178–Ile-346 is spacer. Residues Arg-219–Ala-269 form a disordered region. Residues Leu-223–Arg-235 are compositionally biased toward low complexity. Residues Glu-347–Gln-690 form a polymerase/reverse transcriptase domain (RT) region. Positions Glu-357 to Ile-600 constitute a Reverse transcriptase domain. Mg(2+)-binding residues include Asp-429, Asp-551, and Asp-552.

Belongs to the hepadnaviridae P protein family.

It carries out the reaction DNA(n) + a 2'-deoxyribonucleoside 5'-triphosphate = DNA(n+1) + diphosphate. The enzyme catalyses Endonucleolytic cleavage to 5'-phosphomonoester.. Its activity is regulated as follows. Activated by host HSP70 and HSP40 in vitro to be able to bind the epsilon loop of the pgRNA. Because deletion of the RNase H region renders the protein partly chaperone-independent, the chaperones may be needed indirectly to relieve occlusion of the RNA-binding site by this domain. Inhibited by several reverse-transcriptase inhibitors: Lamivudine, Adefovir and Entecavir. In terms of biological role, multifunctional enzyme that converts the viral RNA genome into dsDNA in viral cytoplasmic capsids. This enzyme displays a DNA polymerase activity that can copy either DNA or RNA templates, and a ribonuclease H (RNase H) activity that cleaves the RNA strand of RNA-DNA heteroduplexes in a partially processive 3'- to 5'-endonucleasic mode. Neo-synthesized pregenomic RNA (pgRNA) are encapsidated together with the P protein, and reverse-transcribed inside the nucleocapsid. Initiation of reverse-transcription occurs first by binding the epsilon loop on the pgRNA genome, and is initiated by protein priming, thereby the 5'-end of (-)DNA is covalently linked to P protein. Partial (+)DNA is synthesized from the (-)DNA template and generates the relaxed circular DNA (RC-DNA) genome. After budding and infection, the RC-DNA migrates in the nucleus, and is converted into a plasmid-like covalently closed circular DNA (cccDNA). The activity of P protein does not seem to be necessary for cccDNA generation, and is presumably released from (+)DNA by host nuclear DNA repair machinery. The chain is Protein P from Hepatitis B virus genotype B2 subtype adw (isolate China/patient4/1996) (HBV-B).